The chain runs to 578 residues: Frizzled and smoothened-like protein Q (578 aa).

Residues 1–23 form the signal peptide; it reads MKNSFLINILIIYYLFIILFVNS. Residues 24–233 lie on the Extracellular side of the membrane; that stretch reads QDLKLGGSCE…GKTKILDRTN (210 aa). An FZ domain is found at 27–157; sequence KLGGSCELID…GAPMFPINST (131 aa). Intrachain disulfides connect Cys32/Cys95, Cys41/Cys88, Cys79/Cys128, and Cys121/Cys141. Residues Asn46, Asn64, Asn99, and Asn104 are each glycosylated (N-linked (GlcNAc...) asparagine). Asn144, Asn155, Asn181, and Asn233 each carry an N-linked (GlcNAc...) asparagine glycan. A helical membrane pass occupies residues 234 to 254; it reads YTLTSISFITCIFMILTFGVL. At 255–261 the chain is on the cytoplasmic side; the sequence is PNKITHR. The helical transmembrane segment at 262–282 threads the bilayer; the sequence is MESILSFACGGCITALSLFIQ. Topologically, residues 283–305 are extracellular; sequence SRQDNFNCSSDPGRFKSQSDYLC. Asn289 carries N-linked (GlcNAc...) asparagine glycosylation. Residues 306 to 326 form a helical membrane-spanning segment; sequence LLTGLIFQFGAITSIFWSPMI. Residues 327–341 are Cytoplasmic-facing; sequence AYDFYITSTLGKIRK. A helical membrane pass occupies residues 342–362; the sequence is FGLYRIVLWSFIFVLTALPAF. At 363-388 the chain is on the extracellular side; sequence GGKYSATVATNCWINSDDGSAWQYVS. The chain crosses the membrane as a helical span at residues 389–409; the sequence is FYIPSWCAMGLICLFSILSVI. The Cytoplasmic segment spans residues 410 to 422; sequence NVSKMYIQTPNNR. A helical transmembrane segment spans residues 423–443; it reads ILFFNIKILITLLLFLFVLTF. At 444 to 490 the chain is on the extracellular side; that stretch reads ASSLKFYMEERMDTYFDAIAVWVECIGKGDPSQCELHAPGYDLKALN. The helical transmembrane segment at 491-511 threads the bilayer; sequence IVVIGILGFTVFIGYGLDPIV. At 512 to 578 the chain is on the cytoplasmic side; it reads IHIWMESKKF…LKSTEINQQP (67 aa). The span at 544-556 shows a compositional bias: low complexity; sequence NNNNNETASTSSG. Residues 544 to 578 form a disordered region; it reads NNNNNETASTSSGNERKQTTVKMSNLKSTEINQQP. Over residues 563 to 578 the composition is skewed to polar residues; it reads TVKMSNLKSTEINQQP.

It belongs to the G-protein coupled receptor Fz/Smo family.

It localises to the membrane. The sequence is that of Frizzled and smoothened-like protein Q (fslQ) from Dictyostelium discoideum (Social amoeba).